We begin with the raw amino-acid sequence, 348 residues long: Fructose-1,6-bisphosphatase (348 aa).

Positions 2 to 5 match the Pro/N-degron motif; that stretch reads PTLV. The residue at position 12 (Ser12) is a Phosphoserine. Residues 27–31 and 38–42 contribute to the AMP site; these read IIEHQ and TGDFT. Mg(2+)-binding residues include Asp79 and Glu108. 122 to 123 contributes to the AMP binding site; sequence SY. Positions 128, 130, and 131 each coordinate Mg(2+). 131–134 contributes to the substrate binding site; it reads DGSS. AMP is bound at residue Arg150. Residues 222–225, 255–260, Tyr276, and 286–288 each bind substrate; these read NEGN, RYVGSM, and KLR. Position 292 (Glu292) interacts with Mg(2+).

It belongs to the FBPase class 1 family. Homotetramer. The cofactor is Mg(2+). Post-translationally, ubiquitinated. Targeted for proteasomal degradation when cells are shifted to glucose-containing growth medium.

The enzyme catalyses beta-D-fructose 1,6-bisphosphate + H2O = beta-D-fructose 6-phosphate + phosphate. Its pathway is carbohydrate biosynthesis; gluconeogenesis. With respect to regulation, subject to complex allosteric regulation. The enzyme can assume an active R-state, or an inactive T-state. Intermediate conformations may exist. AMP acts as allosteric inhibitor. AMP binding affects the turnover of bound substrate and not the affinity for substrate. The polypeptide is Fructose-1,6-bisphosphatase (FBP1) (Saccharomyces cerevisiae (strain ATCC 204508 / S288c) (Baker's yeast)).